The primary structure comprises 396 residues: 1-deoxy-D-xylulose 5-phosphate reductoisomerase (396 aa).

Positions 10, 11, 12, 13, 36, 37, 38, and 124 each coordinate NADPH. Position 125 (lysine 125) interacts with 1-deoxy-D-xylulose 5-phosphate. Glutamate 126 provides a ligand contact to NADPH. Aspartate 150 serves as a coordination point for Mn(2+). Residues serine 151, glutamate 152, serine 186, and histidine 209 each contribute to the 1-deoxy-D-xylulose 5-phosphate site. Glutamate 152 is a binding site for Mn(2+). Residue glycine 215 participates in NADPH binding. 1-deoxy-D-xylulose 5-phosphate-binding residues include serine 222, asparagine 227, lysine 228, and glutamate 231. Glutamate 231 lines the Mn(2+) pocket.

It belongs to the DXR family. Requires Mg(2+) as cofactor. The cofactor is Mn(2+).

It carries out the reaction 2-C-methyl-D-erythritol 4-phosphate + NADP(+) = 1-deoxy-D-xylulose 5-phosphate + NADPH + H(+). It participates in isoprenoid biosynthesis; isopentenyl diphosphate biosynthesis via DXP pathway; isopentenyl diphosphate from 1-deoxy-D-xylulose 5-phosphate: step 1/6. Functionally, catalyzes the NADPH-dependent rearrangement and reduction of 1-deoxy-D-xylulose-5-phosphate (DXP) to 2-C-methyl-D-erythritol 4-phosphate (MEP). The polypeptide is 1-deoxy-D-xylulose 5-phosphate reductoisomerase (Glaesserella parasuis serovar 5 (strain SH0165) (Haemophilus parasuis)).